A 915-amino-acid chain; its full sequence is Translation initiation factor IF-2 (915 aa).

A compositionally biased stretch (basic and acidic residues) spans Gln83–Leu94. 3 disordered regions span residues Gln83 to Pro177, Glu216 to Val280, and Ile293 to Glu328. Composition is skewed to low complexity over residues Val111 to Ser129 and Ala137 to Pro164. Over residues Leu165–Pro177 the composition is skewed to pro residues. The segment covering Ile293–Arg305 has biased composition (polar residues). The segment covering Met314–Glu328 has biased composition (basic and acidic residues). The tr-type G domain occupies Thr412 to Lys582. The G1 stretch occupies residues Gly421–Thr428. Gly421–Thr428 is a binding site for GTP. The interval Gly446 to His450 is G2. Positions Asp468–Gly471 are G3. Residues Asp468 to His472 and Asn522 to Asp525 contribute to the GTP site. The interval Asn522 to Asp525 is G4. The G5 stretch occupies residues Ser558–Lys560.

This sequence belongs to the TRAFAC class translation factor GTPase superfamily. Classic translation factor GTPase family. IF-2 subfamily.

Its subcellular location is the cytoplasm. In terms of biological role, one of the essential components for the initiation of protein synthesis. Protects formylmethionyl-tRNA from spontaneous hydrolysis and promotes its binding to the 30S ribosomal subunits. Also involved in the hydrolysis of GTP during the formation of the 70S ribosomal complex. This chain is Translation initiation factor IF-2, found in Chlorobium luteolum (strain DSM 273 / BCRC 81028 / 2530) (Pelodictyon luteolum).